Consider the following 208-residue polypeptide: Large ribosomal subunit protein uL4 (208 aa).

The disordered stretch occupies residues 45-84 (RQGTHKVKNRSEVRGGGKKPYRQKGTGHARQGSSRSGLMS). Residues 60 to 71 (GGKKPYRQKGTG) show a composition bias toward basic residues.

It belongs to the universal ribosomal protein uL4 family. As to quaternary structure, part of the 50S ribosomal subunit.

One of the primary rRNA binding proteins, this protein initially binds near the 5'-end of the 23S rRNA. It is important during the early stages of 50S assembly. It makes multiple contacts with different domains of the 23S rRNA in the assembled 50S subunit and ribosome. Functionally, forms part of the polypeptide exit tunnel. The chain is Large ribosomal subunit protein uL4 from Prosthecochloris aestuarii (strain DSM 271 / SK 413).